We begin with the raw amino-acid sequence, 213 residues long: ATP phosphoribosyltransferase (213 aa).

Belongs to the ATP phosphoribosyltransferase family. Short subfamily. Heteromultimer composed of HisG and HisZ subunits.

It localises to the cytoplasm. It carries out the reaction 1-(5-phospho-beta-D-ribosyl)-ATP + diphosphate = 5-phospho-alpha-D-ribose 1-diphosphate + ATP. Its pathway is amino-acid biosynthesis; L-histidine biosynthesis; L-histidine from 5-phospho-alpha-D-ribose 1-diphosphate: step 1/9. In terms of biological role, catalyzes the condensation of ATP and 5-phosphoribose 1-diphosphate to form N'-(5'-phosphoribosyl)-ATP (PR-ATP). Has a crucial role in the pathway because the rate of histidine biosynthesis seems to be controlled primarily by regulation of HisG enzymatic activity. This Chromobacterium violaceum (strain ATCC 12472 / DSM 30191 / JCM 1249 / CCUG 213 / NBRC 12614 / NCIMB 9131 / NCTC 9757 / MK) protein is ATP phosphoribosyltransferase.